Here is a 225-residue protein sequence, read N- to C-terminus: PKHD-type hydroxylase YbiX (225 aa).

The Fe2OG dioxygenase domain occupies 78-177 (TLSTPLFNRY…RVASFMWIQS (100 aa)). Residues His96, Asp98, and His158 each coordinate Fe cation. Position 168 (Arg168) interacts with 2-oxoglutarate.

Fe(2+) serves as cofactor. L-ascorbate is required as a cofactor.

This Escherichia coli (strain 55989 / EAEC) protein is PKHD-type hydroxylase YbiX.